Consider the following 422-residue polypeptide: Proline--tRNA ligase (422 aa).

The protein belongs to the class-II aminoacyl-tRNA synthetase family. ProS type 2 subfamily. As to quaternary structure, homodimer.

It is found in the cytoplasm. It carries out the reaction tRNA(Pro) + L-proline + ATP = L-prolyl-tRNA(Pro) + AMP + diphosphate. Catalyzes the attachment of proline to tRNA(Pro) in a two-step reaction: proline is first activated by ATP to form Pro-AMP and then transferred to the acceptor end of tRNA(Pro). This is Proline--tRNA ligase from Wolbachia sp. subsp. Drosophila simulans (strain wRi).